The sequence spans 102 residues: NADH-quinone oxidoreductase subunit K (102 aa).

Helical transmembrane passes span 6-26 (LEHGLAVAGILFCLGLVGLMV), 30-50 (ILFVLMSLEVMMNASALAFVV), and 62-82 (VMFILVISLAAAEASIGLAIL).

It belongs to the complex I subunit 4L family. As to quaternary structure, NDH-1 is composed of 13 different subunits. Subunits NuoA, H, J, K, L, M, N constitute the membrane sector of the complex.

Its subcellular location is the cell inner membrane. The enzyme catalyses a quinone + NADH + 5 H(+)(in) = a quinol + NAD(+) + 4 H(+)(out). Functionally, NDH-1 shuttles electrons from NADH, via FMN and iron-sulfur (Fe-S) centers, to quinones in the respiratory chain. The immediate electron acceptor for the enzyme in this species is believed to be ubiquinone. Couples the redox reaction to proton translocation (for every two electrons transferred, four hydrogen ions are translocated across the cytoplasmic membrane), and thus conserves the redox energy in a proton gradient. In Pseudomonas putida (strain ATCC 700007 / DSM 6899 / JCM 31910 / BCRC 17059 / LMG 24140 / F1), this protein is NADH-quinone oxidoreductase subunit K.